The chain runs to 402 residues: UDP-N-acetylmuramoylalanine--D-glutamate ligase (402 aa).

Residue 97-103 (GTNGKTT) participates in ATP binding.

Belongs to the MurCDEF family.

The protein resides in the cytoplasm. It carries out the reaction UDP-N-acetyl-alpha-D-muramoyl-L-alanine + D-glutamate + ATP = UDP-N-acetyl-alpha-D-muramoyl-L-alanyl-D-glutamate + ADP + phosphate + H(+). Its pathway is cell wall biogenesis; peptidoglycan biosynthesis. Its function is as follows. Cell wall formation. Catalyzes the addition of glutamate to the nucleotide precursor UDP-N-acetylmuramoyl-L-alanine (UMA). The polypeptide is UDP-N-acetylmuramoylalanine--D-glutamate ligase (Campylobacter jejuni subsp. jejuni serotype O:23/36 (strain 81-176)).